Consider the following 112-residue polypeptide: Macrodomain Ori protein (112 aa).

Residues 91 to 112 are disordered; that stretch reads FHTLSGGKPQVEGAEDYTDSDD. Over residues 103-112 the composition is skewed to acidic residues; that stretch reads GAEDYTDSDD.

The protein belongs to the MaoP family.

Functionally, involved in the organization of the Ori region of the chromosome into a macrodomain (MD). It constrains DNA mobility in the Ori macrodomain and limits long-distance DNA interactions with other chromosomal regions. This Escherichia coli O157:H7 protein is Macrodomain Ori protein.